Reading from the N-terminus, the 192-residue chain is Imidazole glycerol phosphate synthase subunit HisH (192 aa).

In terms of domain architecture, Glutamine amidotransferase type-1 spans 1 to 192 (MIVIVDYGLG…QAIQGGFIND (192 aa)). C77 functions as the Nucleophile in the catalytic mechanism. Active-site residues include H169 and E171.

As to quaternary structure, heterodimer of HisH and HisF.

The protein localises to the cytoplasm. It catalyses the reaction 5-[(5-phospho-1-deoxy-D-ribulos-1-ylimino)methylamino]-1-(5-phospho-beta-D-ribosyl)imidazole-4-carboxamide + L-glutamine = D-erythro-1-(imidazol-4-yl)glycerol 3-phosphate + 5-amino-1-(5-phospho-beta-D-ribosyl)imidazole-4-carboxamide + L-glutamate + H(+). The catalysed reaction is L-glutamine + H2O = L-glutamate + NH4(+). The protein operates within amino-acid biosynthesis; L-histidine biosynthesis; L-histidine from 5-phospho-alpha-D-ribose 1-diphosphate: step 5/9. Functionally, IGPS catalyzes the conversion of PRFAR and glutamine to IGP, AICAR and glutamate. The HisH subunit catalyzes the hydrolysis of glutamine to glutamate and ammonia as part of the synthesis of IGP and AICAR. The resulting ammonia molecule is channeled to the active site of HisF. The protein is Imidazole glycerol phosphate synthase subunit HisH of Staphylococcus aureus (strain bovine RF122 / ET3-1).